A 697-amino-acid chain; its full sequence is MACEIMPLQSSQEDERPMSPFYLSSAHVSQVSSVSSTGELLERTIRSAVEQHLFDVNSSGGQSSEDSESGASSSSSTSTKQRRRQAKEQDESRHSRDVGRLNKENIPSGFSNLDECMLNACEVEKLYENTSGYIGERGKPKRQKSSSRLSELNENQDGLVNMENLNPTPSHERTGSDHVELISDGSKENEKDGRQSQHLENPTMKIQEHPSLPDSKLQRTPDADDQQESFVSEVPELDLTALCDQKSWEEPIPAFSSWQQESVDADEARLSPQAGRLIRQLLEEDSDPMLSPRFYAYGQSRQYLDDTEMPPSPPNSHPFMRRRSSSLGSYEDEQEDLTPAQLTRRIQSLKKKIRKFEDRFEEERKYRPSHSDKAANPEVLKWTNDLAKFRKQLKESKLKISEEDLPPRMRQRSNTLPKSFGSQLEKEDEKKQELVDKAIKPSVEATLESIQRKLQEKRAETSRPEDIKDMTKDQIANEKVALQKALLYYESIHGRPVSKNERQVMKPLYDRYRLVKQILSRASTIPIIGSPSSKRRSPLLQPIIEGETASFFKEIKEEEEGSEDDNYTKPDFMVTLKTDFSARCFLDQFEDDADGFISPMDDKIPSKCSQDTGLSNLHAASIPELLEHLQEMREEKKRIRKKLRDFEDNFFRQNGRNVQKEDRTPMAEEYNEYKHIKAKLRLLEVLISKRDTDSKSM.

Disordered stretches follow at residues 1-21 (MACEIMPLQSSQEDERPMSPF), 52-112 (HLFD…GFSN), and 133-229 (YIGE…QQES). S19 is modified (phosphoserine). Residues 58-78 (SSGGQSSEDSESGASSSSSTS) are compositionally biased toward low complexity. A compositionally biased stretch (basic and acidic residues) spans 86–103 (AKEQDESRHSRDVGRLNK). Residues 146–169 (SSRLSELNENQDGLVNMENLNPTP) show a composition bias toward polar residues. Residues 170–197 (SHERTGSDHVELISDGSKENEKDGRQSQ) are compositionally biased toward basic and acidic residues. 2 positions are modified to phosphoserine: S271 and S291. Disordered regions lie at residues 307-338 (TEMPPSPPNSHPFMRRRSSSLGSYEDEQEDLT) and 398-433 (LKISEEDLPPRMRQRSNTLPKSFGSQLEKEDEKKQE). Basic and acidic residues predominate over residues 398 to 407 (LKISEEDLPP). S401 carries the post-translational modification Phosphoserine. A compositionally biased stretch (polar residues) spans 412–422 (RSNTLPKSFGS). Residues 424–433 (LEKEDEKKQE) show a composition bias toward basic and acidic residues.

Belongs to the FAM13 family.

The sequence is that of Protein FAM13A (FAM13A) from Bos taurus (Bovine).